Reading from the N-terminus, the 194-residue chain is GTP cyclohydrolase-2 (194 aa).

47-51 (RVHSE) contacts GTP. Positions 52, 63, and 65 each coordinate Zn(2+). GTP contacts are provided by residues glutamine 68, 90 to 92 (EGR), and threonine 112. Aspartate 124 (proton acceptor) is an active-site residue. Arginine 126 (nucleophile) is an active-site residue. GTP-binding residues include threonine 147 and lysine 152.

Belongs to the GTP cyclohydrolase II family. In terms of assembly, homodimer. Zn(2+) serves as cofactor.

The catalysed reaction is GTP + 4 H2O = 2,5-diamino-6-hydroxy-4-(5-phosphoribosylamino)-pyrimidine + formate + 2 phosphate + 3 H(+). Its pathway is cofactor biosynthesis; riboflavin biosynthesis; 5-amino-6-(D-ribitylamino)uracil from GTP: step 1/4. Functionally, catalyzes the conversion of GTP to 2,5-diamino-6-ribosylamino-4(3H)-pyrimidinone 5'-phosphate (DARP), formate and pyrophosphate. In Buchnera aphidicola subsp. Acyrthosiphon pisum (strain APS) (Acyrthosiphon pisum symbiotic bacterium), this protein is GTP cyclohydrolase-2.